Here is a 405-residue protein sequence, read N- to C-terminus: L-carnitine CoA-transferase (405 aa).

CoA-binding residues include Lys-97 and Arg-104. Catalysis depends on Asp-169, which acts as the Nucleophile.

The protein belongs to the CoA-transferase III family. CaiB subfamily. As to quaternary structure, homodimer.

Its subcellular location is the cytoplasm. It carries out the reaction crotonobetainyl-CoA + (R)-carnitine = crotonobetaine + (R)-carnitinyl-CoA. The catalysed reaction is 4-(trimethylamino)butanoyl-CoA + (R)-carnitine = (R)-carnitinyl-CoA + 4-(trimethylamino)butanoate. It participates in amine and polyamine metabolism; carnitine metabolism. Functionally, catalyzes the reversible transfer of the CoA moiety from gamma-butyrobetainyl-CoA to L-carnitine to generate L-carnitinyl-CoA and gamma-butyrobetaine. Is also able to catalyze the reversible transfer of the CoA moiety from gamma-butyrobetainyl-CoA or L-carnitinyl-CoA to crotonobetaine to generate crotonobetainyl-CoA. The protein is L-carnitine CoA-transferase of Escherichia fergusonii (strain ATCC 35469 / DSM 13698 / CCUG 18766 / IAM 14443 / JCM 21226 / LMG 7866 / NBRC 102419 / NCTC 12128 / CDC 0568-73).